Reading from the N-terminus, the 1003-residue chain is Calcium-transporting ATPase sarcoplasmic/endoplasmic reticulum type (1003 aa).

The Cytoplasmic segment spans residues 1–59 (MEDAHAKKWEEVVDYFGVDPERGLALEQVKKNQEKYGPNELPAEEGKSLLTLILEQFDD). A helical transmembrane segment spans residues 60–78 (LLVKILLLAAIISLVLALF). Over 79-89 (EEHDDEAEQLT) the chain is Extracellular. A helical transmembrane segment spans residues 90–110 (AYVEPFVILLILIANAVVGVW). Topologically, residues 111–262 (QEKNAESAIE…QQKLDEFGEQ (152 aa)) are cytoplasmic. A helical membrane pass occupies residues 263–282 (LSKVISVICVAVWAINIGHF). Over 283–300 (NDPAHGGSWIKGAIYYFK) the chain is Extracellular. Residues 301–318 (IAVALAVAAIPEGLPAVI) form a helical membrane-spanning segment. The Cytoplasmic segment spans residues 319-775 (TTCLALGTRR…RYLISSNIGE (457 aa)). The active-site 4-aspartylphosphate intermediate is Asp354. Position 519 (Lys519) interacts with ATP. A helical membrane pass occupies residues 776 to 799 (VVSIFLTAALGLPEALIPVQLLWV). The Extracellular portion of the chain corresponds to 800–840 (NLVTDGLPATALGFNPPDLDIMNKPPRRADEGLITGWLFFR). Residues 841-863 (YMAIGTYVGAATVGAAAHWFMMS) form a helical membrane-spanning segment. Topologically, residues 864-898 (PTGPGLNFYQLSHHLQCTPENEYFEGIDCEIFSDP) are cytoplasmic. A helical transmembrane segment spans residues 899-917 (HPMTMALSVLVTIEMLNAI). Over 918–934 (NSLSENQSLLVMPPWSN) the chain is Extracellular. Residues 935–954 (IWLISAICLSMTLHFVILYV) form a helical membrane-spanning segment. Residues 955–1003 (EILSTVFQICPLTLTEWIVVLKISFPVLLLDEVLKFVARKYTDEFSFIK) lie on the Cytoplasmic side of the membrane.

This sequence belongs to the cation transport ATPase (P-type) (TC 3.A.3) family.

The protein resides in the sarcoplasmic reticulum membrane. The enzyme catalyses Ca(2+)(in) + ATP + H2O = Ca(2+)(out) + ADP + phosphate + H(+). Its function is as follows. This magnesium-dependent enzyme catalyzes the hydrolysis of ATP coupled with the transport of the calcium. This chain is Calcium-transporting ATPase sarcoplasmic/endoplasmic reticulum type, found in Artemia franciscana (Brine shrimp).